Reading from the N-terminus, the 542-residue chain is Chaperonin GroEL (542 aa).

Residues T29–P32, D86–T90, G413, N476–A478, and D492 contribute to the ATP site. Residues P522–M542 form a disordered region.

Belongs to the chaperonin (HSP60) family. Forms a cylinder of 14 subunits composed of two heptameric rings stacked back-to-back. Interacts with the co-chaperonin GroES.

The protein resides in the cytoplasm. It carries out the reaction ATP + H2O + a folded polypeptide = ADP + phosphate + an unfolded polypeptide.. In terms of biological role, together with its co-chaperonin GroES, plays an essential role in assisting protein folding. The GroEL-GroES system forms a nano-cage that allows encapsulation of the non-native substrate proteins and provides a physical environment optimized to promote and accelerate protein folding. The protein is Chaperonin GroEL of Listeria monocytogenes serotype 4a (strain HCC23).